A 244-amino-acid polypeptide reads, in one-letter code: UDP-2,3-diacylglucosamine hydrolase (244 aa).

5 residues coordinate Mn(2+): aspartate 8, histidine 10, aspartate 41, asparagine 79, and histidine 114. Residue 79-80 (NR) participates in substrate binding. Substrate contacts are provided by aspartate 122, lysine 164, lysine 167, and histidine 195. Residues histidine 195 and histidine 197 each coordinate Mn(2+).

The protein belongs to the LpxH family. The cofactor is Mn(2+).

The protein resides in the cell inner membrane. It carries out the reaction UDP-2-N,3-O-bis[(3R)-3-hydroxytetradecanoyl]-alpha-D-glucosamine + H2O = 2-N,3-O-bis[(3R)-3-hydroxytetradecanoyl]-alpha-D-glucosaminyl 1-phosphate + UMP + 2 H(+). The protein operates within glycolipid biosynthesis; lipid IV(A) biosynthesis; lipid IV(A) from (3R)-3-hydroxytetradecanoyl-[acyl-carrier-protein] and UDP-N-acetyl-alpha-D-glucosamine: step 4/6. Functionally, hydrolyzes the pyrophosphate bond of UDP-2,3-diacylglucosamine to yield 2,3-diacylglucosamine 1-phosphate (lipid X) and UMP by catalyzing the attack of water at the alpha-P atom. Involved in the biosynthesis of lipid A, a phosphorylated glycolipid that anchors the lipopolysaccharide to the outer membrane of the cell. The polypeptide is UDP-2,3-diacylglucosamine hydrolase (Vibrio atlanticus (strain LGP32) (Vibrio splendidus (strain Mel32))).